We begin with the raw amino-acid sequence, 470 residues long: MDLNFKELAEAKKDAILKDLEELIAIDSSEDLENATEEYPVGKGPVDAMTKFLSFAKRDGFDTENFANYAGRVNFGAGDKRLGIIGHMDVVPAGEGWTRDPFKMEIDEEGRIYGRGSADDKGPSLTAYYGMLLLKEAGFKPKKKIDFVLGTNEETNWVGIDYYLKHEPTPDIVFSPDAEYPIINGEQGIFTLEFSFKNDDTKGDYVLDKFKAGIATNVTPQVTRATISGPDLEAVKLAYESFLADKELDGSFEINDESADIVLIGQGAHASAPQVGKNSATFLALFLDQYAFAGRDKNFLHFLAEVEHEDFYGKKLGIFHHDDLMGDLASSPSMFDYEHAGKASLLNNVRYPQGTDPDTMIKQVLDKFSGILDVTYNGFEEPHYVPGSDPMVQTLLKVYEKQTGKPGHEVVIGGGTYGRLFERGVAFGAQPENGPMVMHAANEFMMLDDLILSIAIYAEAIYELTKDEEL.

Residue His-87 participates in Zn(2+) binding. The active site involves Asp-89. Asp-119 lines the Zn(2+) pocket. The active-site Proton acceptor is the Glu-153. Residues Glu-154 and Asp-177 each coordinate Zn(2+). Residue Arg-350 coordinates substrate. His-439 provides a ligand contact to Zn(2+).

Belongs to the peptidase M20A family. It depends on Zn(2+) as a cofactor.

It localises to the cytoplasm. Its activity is regulated as follows. Fully inhibited by 1,10-phenanthroline or EDTA. Is a relatively unspecific dipeptidase cleaving a variety of dipeptides, notably those with an N-terminal beta-Ala or D-Ala residue, e.g. carnosine (beta-Ala-His). To a lesser extent, also shows aminopeptidase activity, since it is able to catalyze the removal of the N-terminal amino acid from a few distinct tripeptides. The protein is Beta-Ala-Xaa dipeptidase (pepV) of Lactobacillus delbrueckii subsp. lactis.